Reading from the N-terminus, the 57-residue chain is Catalase-1 (57 aa).

Residue Y37 coordinates heme.

In terms of assembly, homodimer. It depends on heme as a cofactor.

The enzyme catalyses 2 H2O2 = O2 + 2 H2O. In terms of biological role, decomposes hydrogen peroxide into water and oxygen; serves to protect cells from the toxic effects of hydrogen peroxide. The protein is Catalase-1 of Comamonas terrigena.